The following is a 228-amino-acid chain: ATP-dependent dethiobiotin synthetase BioD (228 aa).

Residue 12–17 (EIGKTT) participates in ATP binding. Threonine 16 serves as a coordination point for Mg(2+). Residue lysine 37 is part of the active site. A substrate-binding site is contributed by serine 41. ATP-binding positions include aspartate 54, 116-119 (EGAG), and 205-207 (PRL). The Mg(2+) site is built by aspartate 54 and glutamate 116.

The protein belongs to the dethiobiotin synthetase family. In terms of assembly, homodimer. The cofactor is Mg(2+).

It is found in the cytoplasm. It catalyses the reaction (7R,8S)-7,8-diammoniononanoate + CO2 + ATP = (4R,5S)-dethiobiotin + ADP + phosphate + 3 H(+). Its pathway is cofactor biosynthesis; biotin biosynthesis; biotin from 7,8-diaminononanoate: step 1/2. Catalyzes a mechanistically unusual reaction, the ATP-dependent insertion of CO2 between the N7 and N8 nitrogen atoms of 7,8-diaminopelargonic acid (DAPA, also called 7,8-diammoniononanoate) to form a ureido ring. The polypeptide is ATP-dependent dethiobiotin synthetase BioD (Pseudomonas aeruginosa (strain UCBPP-PA14)).